A 367-amino-acid chain; its full sequence is Protein RIC-3 (367 aa).

The N-terminal stretch at 1-31 is a signal peptide; it reads MAYSTVQRVALASGLVLAVSLLLPKAFLSRG. The segment at 30-67 is disordered; it reads RGKRPEPPPGPEGKLDRFPPMMHHHSAPSDGQTPGARF. Over 32-95 the chain is Lumenal; that stretch reads KRPEPPPGPE…AGGGGSGRGL (64 aa). A helical transmembrane segment spans residues 96 to 116; that stretch reads MGQIIPIYGFGIFLYILYILF. Topologically, residues 117 to 367 are cytoplasmic; it reads KLSKGKTAED…LRKRNPQGFE (251 aa). Positions 138 to 169 form a coiled coil; the sequence is HRKITNFELVQLQEKLKETEEAMEKLINRVGP. Residue lysine 201 is modified to N6-acetyllysine; alternate. A Glycyl lysine isopeptide (Lys-Gly) (interchain with G-Cter in ubiquitin); alternate cross-link involves residue lysine 201. Disordered stretches follow at residues 262–301 and 322–367; these read QMGEIEEEGSERLSWDHLPTDPGAQKDNSVAPCDPKPESC and ADGY…QGFE. Basic and acidic residues predominate over residues 271 to 280; the sequence is SERLSWDHLP. Over residues 358-367 the composition is skewed to basic residues; sequence LRKRNPQGFE.

Belongs to the ric-3 family. Monomer and homodimer. Interacts with CHRNA7, CHRNA3, CHRNA4, CHRNB2, CHRNB4 and HTR3A. Expressed in brain, with highest levels in hippocampus, cerebellum and superior colliculus.

It localises to the endoplasmic reticulum membrane. Functionally, molecular chaperone which promotes the proper subunit assembly and surface trafficking of alpha-7 (CHRNA7) nicotinic acetylcholine receptor. Promotes the proper subunit assembly and cell surface expression of alpha-8 (CHRNA8) nicotinic acetylcholine receptor. May also promote functional expression of homomeric serotoninergic 5-HT3 receptors, and of heteromeric acetylcholine receptors alpha-3/beta-2, alpha-3/beta-4, alpha-4/beta-2 and alpha-4/beta-4. The chain is Protein RIC-3 (Ric3) from Mus musculus (Mouse).